The primary structure comprises 419 residues: Hyaluronan synthase (419 aa).

A run of 5 helical transmembrane segments spans residues 8–28 (LIVL…MYLF), 33–53 (VGIY…LSFL), 318–338 (IVAL…VAIG), 345–365 (AIQL…IVAL), and 376–396 (PASF…LQPL).

The protein belongs to the NodC/HAS family. It depends on Mg(2+) as a cofactor.

The protein resides in the cell membrane. The enzyme catalyses [hyaluronan](n) + UDP-N-acetyl-alpha-D-glucosamine = N-acetyl-beta-D-glucosaminyl-(1-&gt;4)-[hyaluronan](n) + UDP + H(+). The catalysed reaction is N-acetyl-beta-D-glucosaminyl-(1-&gt;4)-[hyaluronan](n) + UDP-alpha-D-glucuronate = [hyaluronan](n+1) + UDP + H(+). The protein operates within glycan biosynthesis; hyaluronan biosynthesis. Functionally, glycosaminoglycan synthesis. The hyaluronic acid capsule is involved in the pathogenicity of group A Streptococci; it may be the major virulence determinant. The sequence is that of Hyaluronan synthase (hasA) from Streptococcus pyogenes serotype M3 (strain ATCC BAA-595 / MGAS315).